The chain runs to 240 residues: Putative exosome complex component RRP41 (240 aa).

This sequence belongs to the RNase PH family. Component of the RNA exosome complex.

It localises to the cytoplasm. The protein localises to the nucleus. Its subcellular location is the nucleolus. It is found in the nucleoplasm. Non-catalytic component of the RNA exosome complex which has 3'-&gt;5' exoribonuclease activity and participates in a multitude of cellular RNA processing and degradation events. In Caenorhabditis elegans, this protein is Putative exosome complex component RRP41 (exos-4.1).